The chain runs to 145 residues: Large ribosomal subunit protein bL9 (145 aa).

This sequence belongs to the bacterial ribosomal protein bL9 family.

Binds to the 23S rRNA. The polypeptide is Large ribosomal subunit protein bL9 (Ureaplasma parvum serovar 3 (strain ATCC 700970)).